Consider the following 195-residue polypeptide: Glycerol-3-phosphate acyltransferase (195 aa).

Helical transmembrane passes span 2–22 (INLL…SFIV), 79–99 (AALM…LLGF), 111–131 (VALI…VVIL), and 146–166 (TILP…GLVL).

Belongs to the PlsY family. As to quaternary structure, probably interacts with PlsX.

The protein resides in the cell membrane. The enzyme catalyses an acyl phosphate + sn-glycerol 3-phosphate = a 1-acyl-sn-glycero-3-phosphate + phosphate. It participates in lipid metabolism; phospholipid metabolism. Its function is as follows. Catalyzes the transfer of an acyl group from acyl-phosphate (acyl-PO(4)) to glycerol-3-phosphate (G3P) to form lysophosphatidic acid (LPA). This enzyme utilizes acyl-phosphate as fatty acyl donor, but not acyl-CoA or acyl-ACP. The chain is Glycerol-3-phosphate acyltransferase from Alkaliphilus metalliredigens (strain QYMF).